We begin with the raw amino-acid sequence, 318 residues long: Pantothenate kinase (318 aa).

An ATP-binding site is contributed by 96-103; it reads GSVAVGKS.

Belongs to the prokaryotic pantothenate kinase family.

Its subcellular location is the cytoplasm. It carries out the reaction (R)-pantothenate + ATP = (R)-4'-phosphopantothenate + ADP + H(+). Its pathway is cofactor biosynthesis; coenzyme A biosynthesis; CoA from (R)-pantothenate: step 1/5. This Coxiella burnetii (strain Dugway 5J108-111) protein is Pantothenate kinase.